The sequence spans 710 residues: Protein CNGC15a (710 aa).

The next 6 helical transmembrane spans lie at 85–105 (IFLA…YLPV), 115–135 (SIGL…FYII), 174–194 (LWSD…AVIP), 207–226 (VVRL…IYPL), 248–268 (YLTL…LLSI), and 368–388 (AEIN…ALLI). A nucleoside 3',5'-cyclic phosphate is bound at residue 474 to 559 (LFDQMDDRML…WALDPRPTAV (86 aa)).

This sequence belongs to the cyclic nucleotide-gated cation channel (TC 1.A.1.5) family. As to quaternary structure, interacts (via N-terminus) with DMI1 (via c-terminus). The Nod factor has no effect on this interaction, implying that the complex is maintained after activation. Expressed in roots, stems, leaves, flowers and pods.

It localises to the nucleus membrane. In terms of biological role, cyclic nucleotide-gated channel involved in the establishment of both rhizobial and mycorrhizal associations. Required for full activation of nuclear-localized Ca(2+) oscillations by Nod and Myc factors. Simultaneous activation of the K(+)-permeable channel DMI1 and the Ca(2+) channel CNGC15 can give rise to sustained Ca(2+) oscillations. May function during fertilization in both female and male gametophytic Ca(2+) signaling. The polypeptide is Protein CNGC15a (Medicago truncatula (Barrel medic)).